Reading from the N-terminus, the 262-residue chain is Ribosomal RNA small subunit methyltransferase A (262 aa).

Positions 14, 16, 41, 63, 85, and 105 each coordinate S-adenosyl-L-methionine.

The protein belongs to the class I-like SAM-binding methyltransferase superfamily. rRNA adenine N(6)-methyltransferase family. RsmA subfamily.

The protein resides in the cytoplasm. The catalysed reaction is adenosine(1518)/adenosine(1519) in 16S rRNA + 4 S-adenosyl-L-methionine = N(6)-dimethyladenosine(1518)/N(6)-dimethyladenosine(1519) in 16S rRNA + 4 S-adenosyl-L-homocysteine + 4 H(+). Functionally, specifically dimethylates two adjacent adenosines (A1518 and A1519) in the loop of a conserved hairpin near the 3'-end of 16S rRNA in the 30S particle. May play a critical role in biogenesis of 30S subunits. In Maridesulfovibrio salexigens (strain ATCC 14822 / DSM 2638 / NCIMB 8403 / VKM B-1763) (Desulfovibrio salexigens), this protein is Ribosomal RNA small subunit methyltransferase A.